The following is a 435-amino-acid chain: Serine--tRNA ligase (435 aa).

Threonine 241 to glutamate 243 contacts L-serine. Position 272-274 (arginine 272–glutamate 274) interacts with ATP. Residue glutamate 295 participates in L-serine binding. Glutamate 359–serine 362 is a binding site for ATP. Serine 395 is an L-serine binding site.

This sequence belongs to the class-II aminoacyl-tRNA synthetase family. Type-1 seryl-tRNA synthetase subfamily. As to quaternary structure, homodimer. The tRNA molecule binds across the dimer.

Its subcellular location is the cytoplasm. It carries out the reaction tRNA(Ser) + L-serine + ATP = L-seryl-tRNA(Ser) + AMP + diphosphate + H(+). It catalyses the reaction tRNA(Sec) + L-serine + ATP = L-seryl-tRNA(Sec) + AMP + diphosphate + H(+). The protein operates within aminoacyl-tRNA biosynthesis; selenocysteinyl-tRNA(Sec) biosynthesis; L-seryl-tRNA(Sec) from L-serine and tRNA(Sec): step 1/1. Functionally, catalyzes the attachment of serine to tRNA(Ser). Is also able to aminoacylate tRNA(Sec) with serine, to form the misacylated tRNA L-seryl-tRNA(Sec), which will be further converted into selenocysteinyl-tRNA(Sec). This chain is Serine--tRNA ligase, found in Actinobacillus pleuropneumoniae serotype 7 (strain AP76).